Here is a 197-residue protein sequence, read N- to C-terminus: Holliday junction branch migration complex subunit RuvA (197 aa).

Residues 1–64 form a domain I region; the sequence is MIASIRGILI…EDSLTLYGFE (64 aa). The interval 65-145 is domain II; that stretch reads TVEQRQLFET…GLPTGAAVTP (81 aa). The segment at 146–148 is flexible linker; that stretch reads AVA. A domain III region spans residues 148 to 197; it reads AAANAELSEALISLGFTDAEAAAAIAALPSDAPPDLEERVRLALRYFSAS.

This sequence belongs to the RuvA family. As to quaternary structure, homotetramer. Forms an RuvA(8)-RuvB(12)-Holliday junction (HJ) complex. HJ DNA is sandwiched between 2 RuvA tetramers; dsDNA enters through RuvA and exits via RuvB. An RuvB hexamer assembles on each DNA strand where it exits the tetramer. Each RuvB hexamer is contacted by two RuvA subunits (via domain III) on 2 adjacent RuvB subunits; this complex drives branch migration. In the full resolvosome a probable DNA-RuvA(4)-RuvB(12)-RuvC(2) complex forms which resolves the HJ.

The protein localises to the cytoplasm. In terms of biological role, the RuvA-RuvB-RuvC complex processes Holliday junction (HJ) DNA during genetic recombination and DNA repair, while the RuvA-RuvB complex plays an important role in the rescue of blocked DNA replication forks via replication fork reversal (RFR). RuvA specifically binds to HJ cruciform DNA, conferring on it an open structure. The RuvB hexamer acts as an ATP-dependent pump, pulling dsDNA into and through the RuvAB complex. HJ branch migration allows RuvC to scan DNA until it finds its consensus sequence, where it cleaves and resolves the cruciform DNA. This is Holliday junction branch migration complex subunit RuvA from Roseiflexus sp. (strain RS-1).